An 887-amino-acid polypeptide reads, in one-letter code: Alanine--tRNA ligase (887 aa).

Residues His581, His585, Cys683, and His687 each coordinate Zn(2+).

The protein belongs to the class-II aminoacyl-tRNA synthetase family. Requires Zn(2+) as cofactor.

It localises to the cytoplasm. It carries out the reaction tRNA(Ala) + L-alanine + ATP = L-alanyl-tRNA(Ala) + AMP + diphosphate. Its function is as follows. Catalyzes the attachment of alanine to tRNA(Ala) in a two-step reaction: alanine is first activated by ATP to form Ala-AMP and then transferred to the acceptor end of tRNA(Ala). Also edits incorrectly charged Ser-tRNA(Ala) and Gly-tRNA(Ala) via its editing domain. In Ehrlichia ruminantium (strain Gardel), this protein is Alanine--tRNA ligase.